The primary structure comprises 185 residues: AP-3 complex subunit sigma (185 aa).

It belongs to the adaptor complexes small subunit family. Adaptor protein complex 3 (AP-3) is a heterotetramer composed of 2 large adaptins (APL5 and APL6), a medium adaptin (APM3) and a small adaptin (APS3).

It is found in the golgi apparatus. It localises to the cytoplasmic vesicle membrane. In terms of biological role, part of the AP-3 complex, an adaptor-related complex which is not clathrin-associated. The complex is associated with the Golgi region as well as more peripheral structures. It facilitates the budding of vesicles from the Golgi membrane and may be directly involved in trafficking to the vacuole. The sequence is that of AP-3 complex subunit sigma (APS3) from Eremothecium gossypii (strain ATCC 10895 / CBS 109.51 / FGSC 9923 / NRRL Y-1056) (Yeast).